A 102-amino-acid polypeptide reads, in one-letter code: Bowman-Birk type wound-induced proteinase inhibitor WIP1 (102 aa).

Positions 1-15 (MKSSPHLVLILCLQA) are cleaved as a signal peptide. Cystine bridges form between Cys-46-Cys-102, Cys-47-Cys-60, Cys-50-Cys-98, Cys-67-Cys-74, and Cys-71-Cys-90.

This sequence belongs to the Bowman-Birk serine protease inhibitor family.

The protein is Bowman-Birk type wound-induced proteinase inhibitor WIP1 (WIP1) of Zea mays (Maize).